The following is a 243-amino-acid chain: Proteasome subunit beta (243 aa).

2 stretches are compositionally biased toward basic and acidic residues: residues 1–11 (MRTPTHDEFSG) and 33–47 (NADR…KETK). Positions 1–49 (MRTPTHDEFSGRLDSLNGDRSNVFGPELGEFSNADRRADELGDKETKTG) are cleaved as a propeptide — removed in mature form; by autocatalysis. The interval 1-50 (MRTPTHDEFSGRLDSLNGDRSNVFGPELGEFSNADRRADELGDKETKTGT) is disordered. The active-site Nucleophile is Thr50. Ser129 bears the Phosphoserine mark.

The protein belongs to the peptidase T1B family. As to quaternary structure, the 20S proteasome core is composed of 14 alpha and 14 beta subunits that assemble into four stacked heptameric rings, resulting in a barrel-shaped structure. The two inner rings, each composed of seven catalytic beta subunits, are sandwiched by two outer rings, each composed of seven alpha subunits. H.volcanii produces at least 2 types of 20S proteasomes: an alpha1-beta proteasome and a proteasome containing all three subunits (alpha1, alpha2, and beta) that appears to be asymmetrical with homo-oligomeric alpha1 and alpha2 rings positioned on separate ends. The catalytic chamber with the active sites is on the inside of the barrel. Has probably a gated structure, the ends of the cylinder being occluded by the N-termini of the alpha-subunits. Is likely capped at one or both ends by the proteasome regulatory ATPase, PAN.

It is found in the cytoplasm. It catalyses the reaction Cleavage of peptide bonds with very broad specificity.. Its activity is regulated as follows. The formation of the proteasomal ATPase PAN-20S proteasome complex, via the docking of the C-termini of PAN into the intersubunit pockets in the alpha-rings, triggers opening of the gate for substrate entry. Interconversion between the open-gate and close-gate conformations leads to a dynamic regulation of the 20S proteasome proteolysis activity. In vitro, the chymotrypsin-like activity of the alpha1-beta proteasome is potently inhibited by carbobenzoxyl-leucinyl-leucinyl-leucinal-H (MG132) and significantly by N-acetyl-leucinyl-leucinyl-norleucinal-H (calpain inhibitor I). Functionally, component of the proteasome core, a large protease complex with broad specificity involved in protein degradation. The H.volcanii alpha1-beta proteasome is able to cleave oligopeptides after Phe, Tyr and Trp, poorly after Glu but not after Arg. Thus, displays chymotrypsin-like activity, low caspase-like activity but no trypsin-like activity. This Haloferax volcanii (strain ATCC 29605 / DSM 3757 / JCM 8879 / NBRC 14742 / NCIMB 2012 / VKM B-1768 / DS2) (Halobacterium volcanii) protein is Proteasome subunit beta.